The following is a 293-amino-acid chain: Histone H3-like centromeric protein CSE4 (293 aa).

Residues 132 to 141 (QDLSYDESDY) are compositionally biased toward acidic residues. The interval 132–169 (QDLSYDESDYSDPLQEIDSNYRESPRRTTDKILKSSSK) is disordered. Basic and acidic residues predominate over residues 150 to 164 (SNYRESPRRTTDKIL). The H3-like stretch occupies residues 157–291 (RRTTDKILKS…VQLARRIRGQ (135 aa)).

It belongs to the histone H3 family. In terms of assembly, component of centromeric nucleosomes, where DNA is wrapped around a histone octamer core. The octamer contains two molecules each of H2A, H2B, CSE4/CENPA and H4 assembled in one CSE4-H4 heterotetramer and two H2A-H2B heterodimers. Interacts with the inner kinetochore. In terms of processing, ubiquitinated. Is degraded through ubiquitin-mediated proteolysis when not protected by its association to the kinetochore.

Its subcellular location is the nucleus. It is found in the chromosome. It localises to the centromere. Its function is as follows. Histone H3-like nucleosomal protein that is specifically found in centromeric nucleosomes. Replaces conventional H3 in the nucleosome core of centromeric chromatin that serves as an assembly site for the inner kinetochore. Required for recruitment and assembly of kinetochore proteins, mitotic progression and chromosome segregation. May serve as an epigenetic mark that propagates centromere identity through replication and cell division. In Monosporozyma servazzii (Yeast), this protein is Histone H3-like centromeric protein CSE4 (CSE4).